The primary structure comprises 227 residues: AN1-type zinc finger protein 3 (227 aa).

Residues 12–44 (PSLPPRCPCGFWGSSKTMNLCSKCFADFQKKQP) form an A20-type zinc finger. 4 residues coordinate Zn(2+): Cys-18, Cys-20, Cys-32, and Cys-35. A disordered region spans residues 41-151 (KKQPDDDSTP…RPEESGRSKQ (111 aa)). Low complexity-rich tracts occupy residues 49–59 (TPSTSNSQSDL) and 66–77 (SDNNNTSVTTPT). Polar residues-rich tracts occupy residues 78 to 94 (LSPSQQSLPTELNVTSP) and 111 to 127 (ITPTKRSCGADSQSESE). Residues 135–148 (RLVENPERPEESGR) are compositionally biased toward basic and acidic residues. The AN1-type zinc-finger motif lies at 151–200 (QKSRRRCFQCQTKLELVQQELGSCRCGYVFCMLHRLPEQHDCTFDHMGRG). Zn(2+) contacts are provided by Cys-157, Cys-160, Cys-174, Cys-176, Cys-181, His-184, His-190, and Cys-192.

The polypeptide is AN1-type zinc finger protein 3 (Zfand3) (Rattus norvegicus (Rat)).